The primary structure comprises 195 residues: MSEIKLIVGLANPGAEYAQTRHNAGAWYVEELARICGVSLVPDSKYFGLTARAVLHGKDVRLLIPTTYMNLSGKAVGALANFFRITPEEILVAHDELDMPPGVAKFKLGGGHGGHNGLKDIIAKLANDKNFYRLRIGIGHPGDKNKVSGYVLGKAPAKEQELINAAVDEAVRSTEVLFKEDMVKAMTRLHSFKAE.

TRNA is bound at residue Tyr17. His22 functions as the Proton acceptor in the catalytic mechanism. Residues Tyr68, Asn70, and Asn116 each contribute to the tRNA site.

The protein belongs to the PTH family. In terms of assembly, monomer.

The protein resides in the cytoplasm. The enzyme catalyses an N-acyl-L-alpha-aminoacyl-tRNA + H2O = an N-acyl-L-amino acid + a tRNA + H(+). Functionally, hydrolyzes ribosome-free peptidyl-tRNAs (with 1 or more amino acids incorporated), which drop off the ribosome during protein synthesis, or as a result of ribosome stalling. Its function is as follows. Catalyzes the release of premature peptidyl moieties from peptidyl-tRNA molecules trapped in stalled 50S ribosomal subunits, and thus maintains levels of free tRNAs and 50S ribosomes. The polypeptide is Peptidyl-tRNA hydrolase (Shewanella sp. (strain MR-4)).